A 173-amino-acid chain; its full sequence is 6,7-dimethyl-8-ribityllumazine synthase (173 aa).

5-amino-6-(D-ribitylamino)uracil is bound by residues tyrosine 34, 65 to 67 (ALE), and 94 to 96 (CVI). 99 to 100 (ET) lines the (2S)-2-hydroxy-3-oxobutyl phosphate pocket. Histidine 102 (proton donor) is an active-site residue. Asparagine 127 provides a ligand contact to 5-amino-6-(D-ribitylamino)uracil. Residue arginine 141 participates in (2S)-2-hydroxy-3-oxobutyl phosphate binding.

This sequence belongs to the DMRL synthase family.

The catalysed reaction is (2S)-2-hydroxy-3-oxobutyl phosphate + 5-amino-6-(D-ribitylamino)uracil = 6,7-dimethyl-8-(1-D-ribityl)lumazine + phosphate + 2 H2O + H(+). It functions in the pathway cofactor biosynthesis; riboflavin biosynthesis; riboflavin from 2-hydroxy-3-oxobutyl phosphate and 5-amino-6-(D-ribitylamino)uracil: step 1/2. Catalyzes the formation of 6,7-dimethyl-8-ribityllumazine by condensation of 5-amino-6-(D-ribitylamino)uracil with 3,4-dihydroxy-2-butanone 4-phosphate. This is the penultimate step in the biosynthesis of riboflavin. The polypeptide is 6,7-dimethyl-8-ribityllumazine synthase (Methylorubrum extorquens (strain CM4 / NCIMB 13688) (Methylobacterium extorquens)).